The chain runs to 32 residues: Yop proteins translocation protein A (32 aa).

This is Yop proteins translocation protein A (yscA) from Yersinia enterocolitica serotype O:8 / biotype 1B (strain NCTC 13174 / 8081).